Here is a 539-residue protein sequence, read N- to C-terminus: GMP synthase [glutamine-hydrolyzing] (539 aa).

The Glutamine amidotransferase type-1 domain occupies 4-202 (KILILDFGSQ…VLQIAGAKPD (199 aa)). Cys-81 functions as the Nucleophile in the catalytic mechanism. Catalysis depends on residues His-176 and Glu-178. The 193-residue stretch at 203-395 (WIMSNHIEEA…LGLPPEMVYR (193 aa)) folds into the GMPS ATP-PPase domain. 230–236 (SGGVDSS) serves as a coordination point for ATP.

As to quaternary structure, homodimer.

The catalysed reaction is XMP + L-glutamine + ATP + H2O = GMP + L-glutamate + AMP + diphosphate + 2 H(+). The protein operates within purine metabolism; GMP biosynthesis; GMP from XMP (L-Gln route): step 1/1. In terms of biological role, catalyzes the synthesis of GMP from XMP. In Burkholderia ambifaria (strain MC40-6), this protein is GMP synthase [glutamine-hydrolyzing].